Consider the following 537-residue polypeptide: Putative cysteine ligase BshC (537 aa).

Positions 422-450 form a coiled coil; the sequence is IEKVEGMIEQQRRLNKDLLDEVAGNQNNI.

It belongs to the BshC family.

In terms of biological role, involved in bacillithiol (BSH) biosynthesis. May catalyze the last step of the pathway, the addition of cysteine to glucosamine malate (GlcN-Mal) to generate BSH. This is Putative cysteine ligase BshC from Staphylococcus aureus (strain USA300).